Here is a 353-residue protein sequence, read N- to C-terminus: MTIAIGKFTKDENDLFDIMDDWLRRDRFVFVGWSGLLLFPCAYFAVGGWFTGTTFVTSWYTHGLASSYLEGCNFLTAAVSTPANSLAHSLLLLWGPEAQGDFTRWCQLGGLWTFVALHGAFGLIGFMLRQFELARSVQLRPYNAIAFSGPIAVFVSVFLIYPLGQSGWFFAPSFGVAAIFRFILFFQGFHNWTLNPFHMMGVAGVLGAALLCAIHGATVENTLFEDGDGANTFRAFNPTQAEETYSMVTANRFWSQIFGVAFSNKRWLHFFMLFVPVTGLWMSALGVVGLALNLRAYDFVSQEIRAAEDPEFETFYTKNILLNEGIRAWMAAQDQPHENLIFPEEVLPRGNAL.

Residue Thr-2 is modified to N-acetylthreonine. Residue Thr-2 is modified to Phosphothreonine. A helical membrane pass occupies residues 41–61 (CAYFAVGGWFTGTTFVTSWYT). His-118 serves as a coordination point for chlorophyll a. A helical transmembrane segment spans residues 125-141 (GFMLRQFELARSVQLRP). Positions 130 and 143 each coordinate pheophytin a. The chain crosses the membrane as a helical span at residues 153-166 (VFVSVFLIYPLGQS). Chlorophyll a is bound at residue His-198. The chain crosses the membrane as a helical span at residues 208–228 (AALLCAIHGATVENTLFEDGD). Residues His-215 and Phe-262 each contribute to the a plastoquinone site. His-215 is a Fe cation binding site. His-269 lines the Fe cation pocket. Residues 279–295 (GLWMSALGVVGLALNLR) traverse the membrane as a helical segment.

It belongs to the reaction center PufL/M/PsbA/D family. As to quaternary structure, PSII is composed of 1 copy each of membrane proteins PsbA, PsbB, PsbC, PsbD, PsbE, PsbF, PsbH, PsbI, PsbJ, PsbK, PsbL, PsbM, PsbT, PsbX, PsbY, PsbZ, Psb30/Ycf12, at least 3 peripheral proteins of the oxygen-evolving complex and a large number of cofactors. It forms dimeric complexes. The D1/D2 heterodimer binds P680, chlorophylls that are the primary electron donor of PSII, and subsequent electron acceptors. It shares a non-heme iron and each subunit binds pheophytin, quinone, additional chlorophylls, carotenoids and lipids. There is also a Cl(-1) ion associated with D1 and D2, which is required for oxygen evolution. The PSII complex binds additional chlorophylls, carotenoids and specific lipids. serves as cofactor.

The protein resides in the plastid. It is found in the chloroplast thylakoid membrane. It carries out the reaction 2 a plastoquinone + 4 hnu + 2 H2O = 2 a plastoquinol + O2. In terms of biological role, photosystem II (PSII) is a light-driven water:plastoquinone oxidoreductase that uses light energy to abstract electrons from H(2)O, generating O(2) and a proton gradient subsequently used for ATP formation. It consists of a core antenna complex that captures photons, and an electron transfer chain that converts photonic excitation into a charge separation. The D1/D2 (PsbA/PsbD) reaction center heterodimer binds P680, the primary electron donor of PSII as well as several subsequent electron acceptors. D2 is needed for assembly of a stable PSII complex. In Solanum bulbocastanum (Wild potato), this protein is Photosystem II D2 protein.